Here is a 193-residue protein sequence, read N- to C-terminus: Xanthine phosphoribosyltransferase (193 aa).

The xanthine site is built by leucine 20 and asparagine 27. 5-phospho-alpha-D-ribose 1-diphosphate is bound at residue 129–133 (ANGKA). Lysine 157 is a xanthine binding site.

This sequence belongs to the purine/pyrimidine phosphoribosyltransferase family. Xpt subfamily. In terms of assembly, homodimer.

It is found in the cytoplasm. It carries out the reaction XMP + diphosphate = xanthine + 5-phospho-alpha-D-ribose 1-diphosphate. The protein operates within purine metabolism; XMP biosynthesis via salvage pathway; XMP from xanthine: step 1/1. Its function is as follows. Converts the preformed base xanthine, a product of nucleic acid breakdown, to xanthosine 5'-monophosphate (XMP), so it can be reused for RNA or DNA synthesis. This is Xanthine phosphoribosyltransferase from Bifidobacterium adolescentis (strain ATCC 15703 / DSM 20083 / NCTC 11814 / E194a).